A 165-amino-acid polypeptide reads, in one-letter code: Thiol peroxidase (165 aa).

The Thioredoxin domain occupies 18 to 165 (PAVGSPAPAF…YEAALAALGA (148 aa)). Residue C60 is the Cysteine sulfenic acid (-SOH) intermediate of the active site. An intrachain disulfide couples C60 to C93.

The protein belongs to the peroxiredoxin family. Tpx subfamily. In terms of assembly, homodimer.

The enzyme catalyses a hydroperoxide + [thioredoxin]-dithiol = an alcohol + [thioredoxin]-disulfide + H2O. In terms of biological role, thiol-specific peroxidase that catalyzes the reduction of hydrogen peroxide and organic hydroperoxides to water and alcohols, respectively. Plays a role in cell protection against oxidative stress by detoxifying peroxides. The chain is Thiol peroxidase from Mycobacterium bovis (strain ATCC BAA-935 / AF2122/97).